Reading from the N-terminus, the 471-residue chain is NALCN channel auxiliary factor 2 (471 aa).

The chain crosses the membrane as a helical span at residues 47-67 (LASLLFFTVLLADHLWLCAGA). Positions 76 to 115 (SAMRPPWGAGRERQPVPPRAVLPPPPPSPGEPSASSGTCG) are disordered. The segment covering 90 to 105 (PVPPRAVLPPPPPSPG) has biased composition (pro residues). A glycan (N-linked (GlcNAc...) asparagine) is linked at Asn-120. Disordered regions lie at residues 158 to 178 (EPTT…APEF) and 399 to 424 (HYHP…GGSR). The span at 161–171 (TPAPPLRPPDS) shows a compositional bias: pro residues. The helical transmembrane segment at 432–452 (LCVLVLILLHTVVSFSSSQSG) threads the bilayer.

The protein belongs to the NALF family.

The protein localises to the membrane. Probable component of the NALCN channel complex, a channel that regulates the resting membrane potential and controls neuronal excitability. The polypeptide is NALCN channel auxiliary factor 2 (Nalf2) (Mus musculus (Mouse)).